We begin with the raw amino-acid sequence, 244 residues long: Isoprenyl transferase (244 aa).

D20 is an active-site residue. D20 contacts Mg(2+). Substrate contacts are provided by residues 21-24, W25, R33, H37, and 65-67; these read GNGR and SSE. N68 serves as the catalytic Proton acceptor. Substrate is bound by residues W69, R71, R188, and 194–196; that span reads RIS. E207 is a Mg(2+) binding site.

Belongs to the UPP synthase family. As to quaternary structure, homodimer. The cofactor is Mg(2+).

Functionally, catalyzes the condensation of isopentenyl diphosphate (IPP) with allylic pyrophosphates generating different type of terpenoids. This Rhodopirellula baltica (strain DSM 10527 / NCIMB 13988 / SH1) protein is Isoprenyl transferase.